A 145-amino-acid polypeptide reads, in one-letter code: Late embryogenesis abundant protein D-11 (145 aa).

Positions 1–18 are enriched in polar residues; it reads MAHFQNQYSAPEVTQTDA. The interval 1 to 136 is disordered; sequence MAHFQNQYSA…EAPWSPQPLI (136 aa). Positions 47–57 are enriched in basic residues; sequence GHHHGGHHGLH. Positions 58 to 68 are enriched in low complexity; it reads RTGSSSSSSSS. Residues 82-96 are compositionally biased toward basic and acidic residues; it reads KERLKEKIPGNKEHQ. Over residues 97–107 the composition is skewed to polar residues; it reads SQATSTTTPGQ.

The protein belongs to the plant dehydrin family.

LEA protein are late embryogenesis abundant in higher plant seed embryos. There are two subsets of LEA proteins (5a, and 5b), the first ones are expressed when the cotyledon weight reach 80 mg and the second set are expressed above 100 mg. The function of those proteins is not known. In Gossypium hirsutum (Upland cotton), this protein is Late embryogenesis abundant protein D-11.